An 881-amino-acid chain; its full sequence is DNA mismatch repair protein MutS (881 aa).

Residue 632–639 participates in ATP binding; sequence GPNMGGKS.

Belongs to the DNA mismatch repair MutS family.

This protein is involved in the repair of mismatches in DNA. It is possible that it carries out the mismatch recognition step. This protein has a weak ATPase activity. The chain is DNA mismatch repair protein MutS from Acinetobacter baylyi (strain ATCC 33305 / BD413 / ADP1).